The following is a 154-amino-acid chain: Transcriptional repressor NrdR (154 aa).

A zinc finger spans residues 3–34 (CPFCRHPDSRVVDSRETDEGQAIRRRRSCPEC). The ATP-cone domain maps to 46-136 (LAVVKRSGVT…VYRSFESAAD (91 aa)).

This sequence belongs to the NrdR family. Requires Zn(2+) as cofactor.

Its function is as follows. Negatively regulates transcription of bacterial ribonucleotide reductase nrd genes and operons by binding to NrdR-boxes. The sequence is that of Transcriptional repressor NrdR from Mycobacterium sp. (strain JLS).